The chain runs to 118 residues: MARIAGVNIPDNKHAVISLTYIFGIGRTRSRAICAATGVAETAKIGSLSDDVLDELRGEVAKYTVEGDLRREVSMSIKRLMDLGCNRGIRHRRSLPVRGQRTKTNARTRKGPRKPIRK.

Residues 91–118 (HRRSLPVRGQRTKTNARTRKGPRKPIRK) are disordered.

Belongs to the universal ribosomal protein uS13 family. Part of the 30S ribosomal subunit. Forms a loose heterodimer with protein S19. Forms two bridges to the 50S subunit in the 70S ribosome.

Its function is as follows. Located at the top of the head of the 30S subunit, it contacts several helices of the 16S rRNA. In the 70S ribosome it contacts the 23S rRNA (bridge B1a) and protein L5 of the 50S subunit (bridge B1b), connecting the 2 subunits; these bridges are implicated in subunit movement. Contacts the tRNAs in the A and P-sites. This chain is Small ribosomal subunit protein uS13, found in Marinomonas sp. (strain MWYL1).